The sequence spans 89 residues: Large ribosomal subunit protein bL27 (89 aa).

A disordered region spans residues 1–21 (MAHKKSGGSSRNGRDSNPKYL).

The protein belongs to the bacterial ribosomal protein bL27 family.

This is Large ribosomal subunit protein bL27 from Hyphomonas neptunium (strain ATCC 15444).